Reading from the N-terminus, the 242-residue chain is Protein crossbronx (242 aa).

One can recognise a UBC core domain in the interval 20 to 176; that stretch reads QQEYKILAEY…VQENIKESKA (157 aa).

This sequence belongs to the ubiquitin-conjugating enzyme family. FTS subfamily.

This is Protein crossbronx (cbx) from Drosophila ananassae (Fruit fly).